Consider the following 797-residue polypeptide: Plakophilin-3 (797 aa).

Residues 56–82 are disordered; that stretch reads QLGQQPRHNGAAEPEPEAETARGTSRG. R81 bears the Omega-N-methylarginine mark. A phosphoserine mark is found at S123, S180, and S183. Phosphotyrosine; by SRC is present on Y195. Phosphoserine occurs at positions 238 and 240. At T250 the chain carries Phosphothreonine. Position 261 is an omega-N-methylarginine (R261). A required for interaction with SFN region spans residues 283–288; it reads SLSLSL. A phosphoserine mark is found at S285, S313, S314, and S331. The tract at residues 294–724 is required for interaction with GSK3B; it reads LPDVHGFNSY…AEVLVNIIAV (431 aa). 8 ARM repeats span residues 305-348, 351-390, 393-432, 449-487, 491-536, 596-637, 645-684, and 689-730; these read SHRT…HKCY, AAAK…NLIY, ADNK…NLSS, TDLV…NLSS, ATRQ…NLSY, PKGL…NITA, VLSR…NLSR, and KDEM…NLVV. The segment at 516-797 is required for binding to PKP2 mRNA; sequence AGKCEDKSVE…GYRKEDFLGP (282 aa).

This sequence belongs to the beta-catenin family. As to quaternary structure, found in a complex composed of CDH1, RAP1A and PKP3; PKP3 acts as a scaffold protein within the complex, the complex is required for CDH1 localization to mature desmosome cell junctions. Interacts with FXR1; the interaction facilitates the binding of PKP3 to PKP2 mRNA. Interacts (via ARM repeats) with GSK3B; the interaction may be involved in PKP3 protein degradation. Interacts with hyperphosphorylated and hypophosphorylated RB1; the interaction inhibits RB1 interaction with and repression of the transcription factor E2F1, potentially via sequestering RB1 to the cytoplasm. Interacts with CDKN1A; the interaction sequesters CDKN1A to the cytoplasm thereby repressing its role as an inhibitor of CDK4- and CDK6-driven RB1 phosphorylation. Interacts (via N-terminus) with SFN; the interaction maintains the cytoplasmic pool of PKP3, facilitates PKP3 exchange at desmosomes and restricts PKP3 localization to existing desmosome cell junctions. Interacts (via N-terminus) with JUP; the interaction is required for PKP3 localization to desmosome cell-cell junctions. In terms of processing, phosphorylated at Ser-285 when localized to the cytoplasm, PKP3 at desmosome cell junctions is not phosphorylated. Phosphorylation at Try-195 by SRC is induced by reactive oxygen species and potentially acts as a release mechanism from desmosome cell-cell junctions. As to expression, expressed in the epidermis of the skin, in squamous non-cornifying epithelial cells in the vagina, single layer epithelia of the duodenum and pancreas acini and non-epithelial dendritic reticulum cells of lymph node follicles (at protein level). Expressed in the oral cavity mucosa, epidermis and small intestine epithelium (at protein level). In terms of tissue distribution, expressed in the oral cavity mucosa and epithelial cells of the crypts and villi in the small intestine (at protein level). Expressed in the epidermis with more abundant expression found in the basal and low spinous cells (at protein level).

It is found in the nucleus. The protein resides in the cell junction. Its subcellular location is the desmosome. It localises to the cytoplasm. The protein localises to the cell membrane. It is found in the adherens junction. Functionally, a component of desmosome cell-cell junctions which are required for positive regulation of cellular adhesion. Required for the localization of DSG2, DSP and PKP2 to mature desmosome junctions. May also play a role in the maintenance of DSG3 protein abundance in keratinocytes. Required for the formation of DSP-containing desmosome precursors in the cytoplasm during desmosome assembly. Also regulates the accumulation of CDH1 to mature desmosome junctions, via cAMP-dependent signaling and its interaction with activated RAP1A. Positively regulates the stabilization of PKP2 mRNA and therefore protein abundance, via its interaction with FXR1, may also regulate the protein abundance of DSP via the same mechanism. May also regulate the protein abundance of the desmosome component PKP1. Required for the organization of desmosome junctions at intercellular borders between basal keratinocytes of the epidermis, as a result plays a role in maintenance of the dermal barrier and regulation of the dermal inflammatory response. Required during epidermal keratinocyte differentiation for cell adherence at tricellular cell-cell contacts, via regulation of the timely formation of adherens junctions and desmosomes in a calcium-dependent manner, and may also play a role in the organization of the intracellular actin fiber belt. Acts as a negative regulator of the inflammatory response in hematopoietic cells of the skin and intestine, via modulation of proinflammatory cytokine production. Important for epithelial barrier maintenance in the intestine to reduce intestinal permeability, thereby plays a role in protection from intestinal-derived endotoxemia. Required for the development of hair follicles, via a role in the regulation of inner root sheaf length, correct alignment and anterior-posterior polarity of hair follicles. Promotes proliferation and cell-cycle G1/S phase transition of keratinocytes. Promotes E2F1-driven transcription of G1/S phase promoting genes by acting to release E2F1 from its inhibitory interaction with RB1, via sequestering RB1 and CDKN1A to the cytoplasm and thereby increasing CDK4- and CDK6-driven phosphorylation of RB1. May act as a scaffold protein to facilitate MAPK phosphorylation of RPS6KA protein family members and subsequently promote downstream EGFR signaling. May play a role in the positive regulation of transcription of Wnt-mediated TCF-responsive target genes. This Homo sapiens (Human) protein is Plakophilin-3 (PKP3).